The following is a 216-amino-acid chain: Outer-membrane lipoprotein LolB (216 aa).

A signal peptide spans 1–24 (MNNLNYFTKISASCAALALMTLAG). Cys25 carries N-palmitoyl cysteine lipidation. The S-diacylglycerol cysteine moiety is linked to residue Cys25.

The protein belongs to the LolB family. Monomer.

It is found in the cell outer membrane. Plays a critical role in the incorporation of lipoproteins in the outer membrane after they are released by the LolA protein. This Shewanella loihica (strain ATCC BAA-1088 / PV-4) protein is Outer-membrane lipoprotein LolB.